A 324-amino-acid chain; its full sequence is Fe-S cluster assembly protein dre2 (324 aa).

The N-terminal SAM-like domain stretch occupies residues 28 to 158; it reads GSPSKRTLLL…KMDQPKSFAI (131 aa). Positions 159–217 are linker; sequence PLRRNGKKKDAAKTETFAPAPAPAPPVQPVTVGMINNDDDYENDDDLIDEDTLLSDEDL. C226, C237, C240, and C242 together coordinate [2Fe-2S] cluster. The interval 226–242 is fe-S binding site A; sequence CQPKPGRRRRACKDCTC. [4Fe-4S] cluster contacts are provided by C287, C290, C298, and C301. 2 short sequence motifs (cx2C motif) span residues 287 to 290 and 298 to 301; these read CGNC and CAGC. The fe-S binding site B stretch occupies residues 287–301; it reads CGNCALGDAFRCAGC.

It belongs to the anamorsin family. Monomer. Interacts with tah18. Interacts with mia40. The cofactor is [2Fe-2S] cluster. [4Fe-4S] cluster is required as a cofactor.

The protein localises to the cytoplasm. It is found in the mitochondrion intermembrane space. Its function is as follows. Component of the cytosolic iron-sulfur (Fe-S) protein assembly (CIA) machinery required for the maturation of extramitochondrial Fe-S proteins. Part of an electron transfer chain functioning in an early step of cytosolic Fe-S biogenesis, facilitating the de novo assembly of a [4Fe-4S] cluster on the scaffold complex cfd1-nbp35. Electrons are transferred to dre2 from NADPH via the FAD- and FMN-containing protein tah18. Tah18-dre2 are also required for the assembly of the diferric tyrosyl radical cofactor of ribonucleotide reductase (RNR), probably by providing electrons for reduction during radical cofactor maturation in the catalytic small subunit rnr2. This chain is Fe-S cluster assembly protein dre2, found in Aspergillus niger (strain ATCC MYA-4892 / CBS 513.88 / FGSC A1513).